Consider the following 181-residue polypeptide: Oligoribonuclease (181 aa).

Residues 8-171 (LIWIDMEMTG…ADIYDSIEEL (164 aa)) form the Exonuclease domain. The active site involves Tyr129.

It belongs to the oligoribonuclease family.

The protein resides in the cytoplasm. Functionally, 3'-to-5' exoribonuclease specific for small oligoribonucleotides. This chain is Oligoribonuclease, found in Nitrosomonas europaea (strain ATCC 19718 / CIP 103999 / KCTC 2705 / NBRC 14298).